The chain runs to 661 residues: Kininogen-1 (661 aa).

Residues 1-20 (MKLITTLLLCSGLLLTLTQG) form the signal peptide. The Cystatin kininogen-type 1 domain maps to 28–131 (CNDEAVFQAV…TQTCKIAPSK (104 aa)). 9 cysteine pairs are disulfide-bonded: cysteine 28/cysteine 631, cysteine 83/cysteine 94, cysteine 107/cysteine 125, cysteine 141/cysteine 144, cysteine 205/cysteine 217, cysteine 228/cysteine 247, cysteine 263/cysteine 266, cysteine 327/cysteine 339, and cysteine 350/cysteine 369. Asparagine 82 is a glycosylation site (N-linked (GlcNAc...) asparagine). A Cystatin kininogen-type 2 domain is found at 150-253 (TDSPDLEPVL…SQSCTLYSGD (104 aa)). Residues asparagine 168 and asparagine 204 are each glycosylated (N-linked (GlcNAc...) asparagine). N-linked (GlcNAc...) asparagine glycosylation is present at asparagine 242. The Cystatin kininogen-type 3 domain occupies 272 to 375 (VDSPELKEVL…TVKCQALDMT (104 aa)). Serine 331 carries the phosphoserine modification. Disordered regions lie at residues 405–471 (YIAR…LGHG), 485–583 (DGDD…FQDS), and 626–661 (ATSPKCPGRPWKPASWEDPNTETTEFSDFDLLDALS). Composition is skewed to basic residues over residues 434 to 471 (KANKNHRGHKHGHDHGHWSPRRHGLGHGHQKPHGLGHG) and 492 to 526 (TVGHGHGHGHGHGHGHGHGHGHGHGHGHGHGHGKH). A compositionally biased stretch (low complexity) spans 541–555 (TESLASSSEYSTTST). A compositionally biased stretch (acidic residues) spans 650-661 (EFSDFDLLDALS).

Isoform LMW interacts with CRISP3. Post-translationally, bradykinin is released from kininogen by plasma kallikrein. In terms of processing, phosphorylated by FAM20C in the extracellular medium. Bradykinin is inactivated by ACE, which removes the dipeptide Arg-Phe from its C-terminus. As to expression, plasma.

It localises to the secreted. The protein localises to the extracellular space. Its function is as follows. Kininogens are inhibitors of thiol proteases. HMW-kininogen plays an important role in blood coagulation by helping to position optimally prekallikrein and factor XI next to factor XII; HMW-kininogen inhibits the thrombin- and plasmin-induced aggregation of thrombocytes. LMW-kininogen inhibits the aggregation of thrombocytes. LMW-kininogen is in contrast to HMW-kininogen not involved in blood clotting. The active peptide bradykinin is a potent vasodilatator that is released from HMW-kininogen shows a variety of physiological effects: (A) influence in smooth muscle contraction, (B) induction of hypotension, (C) natriuresis and diuresis, (D) decrease in blood glucose level, (E) it is a mediator of inflammation and causes (E1) increase in vascular permeability, (E2) stimulation of nociceptors (4E3) release of other mediators of inflammation (e.g. prostaglandins), (F) it has a cardioprotective effect (directly via bradykinin action, indirectly via endothelium-derived relaxing factor action). The chain is Kininogen-1 (Kng1) from Mus musculus (Mouse).